A 211-amino-acid polypeptide reads, in one-letter code: Thiamine-phosphate synthase (211 aa).

4-amino-2-methyl-5-(diphosphooxymethyl)pyrimidine is bound by residues 37–41 (QLRIK) and Asn-69. 2 residues coordinate Mg(2+): Asp-70 and Asp-89. A 4-amino-2-methyl-5-(diphosphooxymethyl)pyrimidine-binding site is contributed by Ser-108. 134 to 136 (TQT) contributes to the 2-[(2R,5Z)-2-carboxy-4-methylthiazol-5(2H)-ylidene]ethyl phosphate binding site. Position 137 (Lys-137) interacts with 4-amino-2-methyl-5-(diphosphooxymethyl)pyrimidine. 2-[(2R,5Z)-2-carboxy-4-methylthiazol-5(2H)-ylidene]ethyl phosphate is bound by residues Gly-166 and 186-187 (VS).

It belongs to the thiamine-phosphate synthase family. Mg(2+) serves as cofactor.

It carries out the reaction 2-[(2R,5Z)-2-carboxy-4-methylthiazol-5(2H)-ylidene]ethyl phosphate + 4-amino-2-methyl-5-(diphosphooxymethyl)pyrimidine + 2 H(+) = thiamine phosphate + CO2 + diphosphate. The catalysed reaction is 2-(2-carboxy-4-methylthiazol-5-yl)ethyl phosphate + 4-amino-2-methyl-5-(diphosphooxymethyl)pyrimidine + 2 H(+) = thiamine phosphate + CO2 + diphosphate. It catalyses the reaction 4-methyl-5-(2-phosphooxyethyl)-thiazole + 4-amino-2-methyl-5-(diphosphooxymethyl)pyrimidine + H(+) = thiamine phosphate + diphosphate. Its pathway is cofactor biosynthesis; thiamine diphosphate biosynthesis; thiamine phosphate from 4-amino-2-methyl-5-diphosphomethylpyrimidine and 4-methyl-5-(2-phosphoethyl)-thiazole: step 1/1. In terms of biological role, condenses 4-methyl-5-(beta-hydroxyethyl)thiazole monophosphate (THZ-P) and 2-methyl-4-amino-5-hydroxymethyl pyrimidine pyrophosphate (HMP-PP) to form thiamine monophosphate (TMP). The protein is Thiamine-phosphate synthase of Salmonella choleraesuis (strain SC-B67).